Here is an 87-residue protein sequence, read N- to C-terminus: Elongation factor Ts, chloroplastic (87 aa).

It belongs to the EF-Ts family.

It is found in the plastid. The protein resides in the chloroplast. In terms of biological role, associates with the EF-Tu.GDP complex and induces the exchange of GDP to GTP. It remains bound to the aminoacyl-tRNA.EF-Tu.GTP complex up to the GTP hydrolysis stage on the ribosome. The polypeptide is Elongation factor Ts, chloroplastic (tsf) (Antithamnion sp. (Red alga)).